The following is a 312-amino-acid chain: Ribosomal protein L11 methyltransferase (312 aa).

S-adenosyl-L-methionine contacts are provided by T162, G183, D205, and N248.

The protein belongs to the methyltransferase superfamily. PrmA family.

It is found in the cytoplasm. It carries out the reaction L-lysyl-[protein] + 3 S-adenosyl-L-methionine = N(6),N(6),N(6)-trimethyl-L-lysyl-[protein] + 3 S-adenosyl-L-homocysteine + 3 H(+). Functionally, methylates ribosomal protein L11. This Bacillus anthracis (strain A0248) protein is Ribosomal protein L11 methyltransferase.